A 278-amino-acid chain; its full sequence is Diaminopimelate epimerase (278 aa).

Substrate-binding residues include N13, Q46, and N65. The active-site Proton donor is C74. Substrate contacts are provided by residues 75–76 (GN), N157, N190, and 208–209 (ER). The active-site Proton acceptor is C217. Substrate is bound at residue 218–219 (GT).

This sequence belongs to the diaminopimelate epimerase family. Homodimer.

It localises to the cytoplasm. It catalyses the reaction (2S,6S)-2,6-diaminopimelate = meso-2,6-diaminopimelate. Its pathway is amino-acid biosynthesis; L-lysine biosynthesis via DAP pathway; DL-2,6-diaminopimelate from LL-2,6-diaminopimelate: step 1/1. Functionally, catalyzes the stereoinversion of LL-2,6-diaminopimelate (L,L-DAP) to meso-diaminopimelate (meso-DAP), a precursor of L-lysine and an essential component of the bacterial peptidoglycan. This is Diaminopimelate epimerase from Magnetococcus marinus (strain ATCC BAA-1437 / JCM 17883 / MC-1).